Consider the following 492-residue polypeptide: Bifunctional protein GlmU (492 aa).

The pyrophosphorylase stretch occupies residues 1 to 241 (MTFRGDTAVL…NALVAGVNNR (241 aa)). UDP-N-acetyl-alpha-D-glucosamine is bound by residues 12-15 (LAAG), lysine 26, glutamine 83, 88-89 (GT), 112-114 (SGD), glycine 151, glutamate 166, asparagine 181, and asparagine 239. Mg(2+) is bound at residue aspartate 114. Mg(2+) is bound at residue asparagine 239. The segment at 242 to 262 (VQLAELSAELNRRIVATHQVA) is linker. Positions 263–492 (GVTIIDPATT…KQSQQKSEPD (230 aa)) are N-acetyltransferase. The UDP-N-acetyl-alpha-D-glucosamine site is built by arginine 344 and lysine 362. The Proton acceptor role is filled by histidine 374. UDP-N-acetyl-alpha-D-glucosamine is bound by residues tyrosine 377 and asparagine 388. Residues alanine 391, 397-398 (NY), serine 416, and alanine 434 contribute to the acetyl-CoA site. The segment at 461–492 (VQRKRPGSAAAQAAEKASTRTGKQSQQKSEPD) is disordered. Positions 479–492 (TRTGKQSQQKSEPD) are enriched in polar residues.

In the N-terminal section; belongs to the N-acetylglucosamine-1-phosphate uridyltransferase family. It in the C-terminal section; belongs to the transferase hexapeptide repeat family. Homotrimer. The cofactor is Mg(2+).

The protein localises to the cytoplasm. The catalysed reaction is alpha-D-glucosamine 1-phosphate + acetyl-CoA = N-acetyl-alpha-D-glucosamine 1-phosphate + CoA + H(+). It catalyses the reaction N-acetyl-alpha-D-glucosamine 1-phosphate + UTP + H(+) = UDP-N-acetyl-alpha-D-glucosamine + diphosphate. It functions in the pathway nucleotide-sugar biosynthesis; UDP-N-acetyl-alpha-D-glucosamine biosynthesis; N-acetyl-alpha-D-glucosamine 1-phosphate from alpha-D-glucosamine 6-phosphate (route II): step 2/2. It participates in nucleotide-sugar biosynthesis; UDP-N-acetyl-alpha-D-glucosamine biosynthesis; UDP-N-acetyl-alpha-D-glucosamine from N-acetyl-alpha-D-glucosamine 1-phosphate: step 1/1. Its pathway is bacterial outer membrane biogenesis; LPS lipid A biosynthesis. Its function is as follows. Catalyzes the last two sequential reactions in the de novo biosynthetic pathway for UDP-N-acetylglucosamine (UDP-GlcNAc). The C-terminal domain catalyzes the transfer of acetyl group from acetyl coenzyme A to glucosamine-1-phosphate (GlcN-1-P) to produce N-acetylglucosamine-1-phosphate (GlcNAc-1-P), which is converted into UDP-GlcNAc by the transfer of uridine 5-monophosphate (from uridine 5-triphosphate), a reaction catalyzed by the N-terminal domain. This Mycobacterium leprae (strain Br4923) protein is Bifunctional protein GlmU.